Here is a 212-residue protein sequence, read N- to C-terminus: phospholipase A2 inhibitor and Ly6/PLAUR domain-containing protein (212 aa).

Positions 1–24 (MILFRRHRTFLLAFTLLCTLLGLG) are cleaved as a signal peptide. In terms of domain architecture, UPAR/Ly6 spans 27-117 (LTCEVCKGSG…NSGSVPPPLN (91 aa)). Intrachain disulfides connect C29/C53, C32/C39, C46/C74, C80/C101, C102/C107, C126/C152, and C145/C173.

The protein belongs to the CNF-like-inhibitor family.

Its subcellular location is the secreted. The chain is phospholipase A2 inhibitor and Ly6/PLAUR domain-containing protein (Pinlyp) from Mus musculus (Mouse).